The sequence spans 361 residues: Histidine biosynthesis bifunctional protein HisB (361 aa).

Residues 1–172 (MTQPTLFIDR…PKTTACKRPP (172 aa)) are histidinol-phosphatase. Catalysis depends on D9, which acts as the Nucleophile. Residues D9 and D11 each coordinate Mg(2+). D11 serves as the catalytic Proton donor. Residues C92, H94, C100, and C102 each coordinate Zn(2+). D129 contacts Mg(2+). Residues 173–361 (RYAEVVRTTK…NELPSSKGVL (189 aa)) are imidazoleglycerol-phosphate dehydratase.

It in the N-terminal section; belongs to the histidinol-phosphatase family. In the C-terminal section; belongs to the imidazoleglycerol-phosphate dehydratase family. It depends on Mg(2+) as a cofactor. Zn(2+) is required as a cofactor.

It is found in the cytoplasm. It catalyses the reaction D-erythro-1-(imidazol-4-yl)glycerol 3-phosphate = 3-(imidazol-4-yl)-2-oxopropyl phosphate + H2O. The enzyme catalyses L-histidinol phosphate + H2O = L-histidinol + phosphate. Its pathway is amino-acid biosynthesis; L-histidine biosynthesis; L-histidine from 5-phospho-alpha-D-ribose 1-diphosphate: step 6/9. It functions in the pathway amino-acid biosynthesis; L-histidine biosynthesis; L-histidine from 5-phospho-alpha-D-ribose 1-diphosphate: step 8/9. The protein is Histidine biosynthesis bifunctional protein HisB of Actinobacillus pleuropneumoniae serotype 3 (strain JL03).